The primary structure comprises 869 residues: H(+)/Cl(-) exchange transporter 6 (869 aa).

Over 1 to 80 (MAGCRGSLCC…KKGRRYEAVK (80 aa)) the chain is Cytoplasmic. A run of 2 helical transmembrane segments spans residues 81–113 (WMVV…FGVV) and 128–150 (LSLL…LVLI). The short motif at 156 to 160 (GSGIP) is the Selectivity filter part_1 element. S157 serves as a coordination point for chloride. Positions 159–166 (IPEVKCYL) form an intramembrane region, helical. 2 consecutive transmembrane segments (helical) span residues 176 to 194 (RLRT…VAGG) and 200 to 217 (EGPM…LPQF). Residues 198-202 (EKEGP) carry the Selectivity filter part_2 motif. 2 consecutive intramembrane regions (helical) follow at residues 241-253 (FVSA…VAAA) and 257-265 (PIGGTLFSL). The next 3 membrane-spanning stretches (helical) occupy residues 277–294 (TWKV…LNFF), 335–364 (GFFV…YRMR), and 371–392 (KLVR…VFVA). N-linked (GlcNAc...) asparagine glycosylation is found at N410, N422, and N432. The next 2 membrane-spanning stretches (helical) occupy residues 462 to 481 (PVTL…WTYG) and 487 to 511 (GLFV…KSYI). Residues 487 to 491 (GLFVP) carry the Selectivity filter part_3 motif. F489 provides a ligand contact to chloride. An intramembrane region (helical) is located at residues 519–533 (GTFALIGAAAFLGGV). The note=Loop between two helices intramembrane region spans 534–536 (VRM). The helical intramembrane region spans 537–548 (TISLTVILIEST). Positions 549–552 (NEIT) form an intramembrane region, note=Loop between two helices. The helical transmembrane segment at 553–571 (YGLPIMVTLMVAKWTGDFF) threads the bilayer. At 572–869 (NKGIYDIHVG…ARLRQHYQTI (298 aa)) the chain is on the cytoplasmic side. Y576 contacts chloride. One can recognise a CBS 1 domain in the interval 605–662 (MEPNLTYVYPHTRIQSLVSILRTTVHHAFPVVTENRGNEKEFMKGNQLISNNIKFKKS). 630-632 (HHA) provides a ligand contact to ATP. At S773 the chain carries Phosphoserine. Positions 807-868 (MNPSPFTVSP…QARLRQHYQT (62 aa)) constitute a CBS 2 domain. ATP is bound at residue 849–852 (TRHN).

Belongs to the chloride channel (TC 2.A.49) family. ClC-6/CLCN6 subfamily. Post-translationally, N-glycosylated on several asparagine residues. As to expression, testis, ovary, small intestine, brain and skeletal muscle. Low level expression in aortic and coronary vascular smooth muscle cells, and aortic endothelial cells. Isoform 3 is only detected in kidney.

It is found in the late endosome membrane. It carries out the reaction 2 chloride(in) + H(+)(out) = 2 chloride(out) + H(+)(in). Its function is as follows. Voltage-gated channel mediating the exchange of chloride ions against protons. Functions as antiporter and contributes to the acidification of the late endosome lumen. The CLC channel family contains both chloride channels and proton-coupled anion transporters that exchange chloride or another anion for protons. The presence of conserved gating glutamate residues is typical for family members that function as antiporters. This Homo sapiens (Human) protein is H(+)/Cl(-) exchange transporter 6.